The following is a 262-amino-acid chain: 3-methyl-2-oxobutanoate hydroxymethyltransferase (262 aa).

Mg(2+)-binding residues include Asp-44 and Asp-83. 3-methyl-2-oxobutanoate is bound by residues 44 to 45 (DS), Asp-83, and Lys-111. Glu-113 contacts Mg(2+). Glu-180 functions as the Proton acceptor in the catalytic mechanism.

Belongs to the PanB family. In terms of assembly, homodecamer; pentamer of dimers. It depends on Mg(2+) as a cofactor.

It is found in the cytoplasm. It carries out the reaction 3-methyl-2-oxobutanoate + (6R)-5,10-methylene-5,6,7,8-tetrahydrofolate + H2O = 2-dehydropantoate + (6S)-5,6,7,8-tetrahydrofolate. It functions in the pathway cofactor biosynthesis; (R)-pantothenate biosynthesis; (R)-pantoate from 3-methyl-2-oxobutanoate: step 1/2. Functionally, catalyzes the reversible reaction in which hydroxymethyl group from 5,10-methylenetetrahydrofolate is transferred onto alpha-ketoisovalerate to form ketopantoate. The chain is 3-methyl-2-oxobutanoate hydroxymethyltransferase from Alcanivorax borkumensis (strain ATCC 700651 / DSM 11573 / NCIMB 13689 / SK2).